A 1312-amino-acid chain; its full sequence is DNA repair protein RAD50.L (1312 aa).

Residues R13, N38, G39, G41, K42, T43, T44, V67, D69, and Q159 each coordinate ATP. Residue T43 participates in Mg(2+) binding. Mg(2+) is bound at residue Q159. Coiled-coil stretches lie at residues 203 to 342 (VREY…LNRE), 415 to 558 (LREF…IKSR), and 587 to 628 (INQT…FEEK). Residues 635 to 734 (SQDFDSDLSR…RKDDMMELKP (100 aa)) enclose the Zinc-hook domain. The Zn(2+) site is built by C681 and C684. A coiled-coil region spans residues 712-1070 (LKSAEGELKR…ENKSESLKTN (359 aa)).

It belongs to the SMC family. RAD50 subfamily. As to quaternary structure, component of the MRN complex composed of two heterodimers RAD50 and MRE11 associated with a single NBN. It depends on Zn(2+) as a cofactor.

It localises to the nucleus. The protein resides in the chromosome. The protein localises to the telomere. It catalyses the reaction ATP + H2O = ADP + phosphate + H(+). Functionally, component of the MRN complex, which plays a central role in double-strand break (DSB) repair, DNA recombination, maintenance of telomere integrity and meiosis. The MRN complex is involved in the repair of DNA double-strand breaks (DSBs) via homologous recombination (HR), an error-free mechanism which primarily occurs during S and G2 phases. The complex (1) mediates the end resection of damaged DNA, which generates proper single-stranded DNA, a key initial steps in HR, and is (2) required for the recruitment of other repair factors and efficient activation of ATM and ATR upon DNA damage. The MRN complex possesses single-strand endonuclease activity and double-strand-specific 3'-5' exonuclease activity, which are provided by mre11, to initiate end resection, which is required for single-strand invasion and recombination. Within the complex, rad50 is both required to bind DNA ends and hold them in close proximity and regulate the activity of MRE11. Rad50 provides an ATP-dependent control of MRE11 by positioning DNA ends into the mre11 active site: ATP-binding induces a large structural change from an open form with accessible MRE11 nuclease sites into a closed form. The MRN complex is also required for DNA damage signaling via activation of the atm and atr kinases: the nuclease activity of mre11 is not required to activate ATM and ATR. The MRN complex promotes recruitment of topbp1 to DNA damage sites. The MRN complex and rbbp8/CtIP are also required for chromosome alignment during metaphase. The chain is DNA repair protein RAD50.L from Xenopus laevis (African clawed frog).